Consider the following 661-residue polypeptide: DNA ligase (661 aa).

NAD(+)-binding positions include 31–35, 80–81, and Glu-109; these read DSGYD and SL. Lys-111 functions as the N6-AMP-lysine intermediate in the catalytic mechanism. The NAD(+) site is built by Arg-132, Glu-167, Lys-283, and Lys-307. Residues Cys-401, Cys-404, Cys-419, and Cys-424 each contribute to the Zn(2+) site. The BRCT domain maps to 582-661; it reads AGEQLLQGKT…AGFLNLLGLS (80 aa).

The protein belongs to the NAD-dependent DNA ligase family. LigA subfamily. Requires Mg(2+) as cofactor. Mn(2+) serves as cofactor.

The enzyme catalyses NAD(+) + (deoxyribonucleotide)n-3'-hydroxyl + 5'-phospho-(deoxyribonucleotide)m = (deoxyribonucleotide)n+m + AMP + beta-nicotinamide D-nucleotide.. Its function is as follows. DNA ligase that catalyzes the formation of phosphodiester linkages between 5'-phosphoryl and 3'-hydroxyl groups in double-stranded DNA using NAD as a coenzyme and as the energy source for the reaction. It is essential for DNA replication and repair of damaged DNA. The sequence is that of DNA ligase from Syntrophomonas wolfei subsp. wolfei (strain DSM 2245B / Goettingen).